The following is a 307-amino-acid chain: HTH-type transcriptional regulator DmlR (307 aa).

One can recognise an HTH lysR-type domain in the interval 5-62; the sequence is PLLNDLRVFMLVARRAGFAAVAEELGVSPAFVSKRIALLEQTLNVVLLHRTTRRVTIT. Residues 22–41 constitute a DNA-binding region (H-T-H motif); sequence FAAVAEELGVSPAFVSKRIA.

It belongs to the LysR transcriptional regulatory family.

Its function is as follows. Transcriptional regulator required for the aerobic growth on D-malate as the sole carbon source. Induces the expression of dmlA in response to D-malate or L- or meso-tartrate. Negatively regulates its own expression. In Escherichia coli (strain K12), this protein is HTH-type transcriptional regulator DmlR (dmlR).